We begin with the raw amino-acid sequence, 246 residues long: MHASTGKGSKIKYSRVLFKISGEALMGSRPFGHDMELIDQLCKDISDIYKLGVQVCIVVGGGNIFRGASASLSGCERASSDYIGMLATIINALILQNFLEKNSVNSKVLSAIPMVTICEPYIRRKAIHHLEKGRVVIFAAGTGNPFFTTDTAAALRAVETNCDAILKGTQVNGVYSADPKKNEDAVMYDRLSYMDLLTRDLKVVDASAISLARENSIPIIVFSLKEEKIVNIVKGHGTYTIVSDCE.

19–22 (KISG) is an ATP binding site. Residue G61 participates in UMP binding. G62 and R66 together coordinate ATP. Residues D81 and 142–149 (TGNPFFTT) each bind UMP. 4 residues coordinate ATP: T169, Q170, Y175, and D178.

Belongs to the UMP kinase family. Homohexamer.

Its subcellular location is the cytoplasm. It carries out the reaction UMP + ATP = UDP + ADP. The protein operates within pyrimidine metabolism; CTP biosynthesis via de novo pathway; UDP from UMP (UMPK route): step 1/1. Its activity is regulated as follows. Inhibited by UTP. Catalyzes the reversible phosphorylation of UMP to UDP. In Wolbachia sp. subsp. Brugia malayi (strain TRS), this protein is Uridylate kinase.